The primary structure comprises 91 residues: Acylphosphatase (91 aa).

Residues 3–91 (TVTMRVTGLV…EKFTRFSVVY (89 aa)) enclose the Acylphosphatase-like domain. Catalysis depends on residues Arg18 and Asn36.

Belongs to the acylphosphatase family.

The enzyme catalyses an acyl phosphate + H2O = a carboxylate + phosphate + H(+). The polypeptide is Acylphosphatase (acyP) (Lactobacillus johnsonii (strain CNCM I-12250 / La1 / NCC 533)).